The sequence spans 278 residues: Orotidine 5'-phosphate decarboxylase (278 aa).

Residues Asp40, Lys65–His67, Asp96–Thr105, Tyr230, and Arg248 contribute to the substrate site. Lys98 acts as the Proton donor in catalysis.

Belongs to the OMP decarboxylase family.

It catalyses the reaction orotidine 5'-phosphate + H(+) = UMP + CO2. It participates in pyrimidine metabolism; UMP biosynthesis via de novo pathway; UMP from orotate: step 2/2. The polypeptide is Orotidine 5'-phosphate decarboxylase (pyrG) (Penicillium chrysogenum (Penicillium notatum)).